A 127-amino-acid chain; its full sequence is Ribosome-binding factor A (127 aa).

The protein belongs to the RbfA family. In terms of assembly, monomer. Binds 30S ribosomal subunits, but not 50S ribosomal subunits or 70S ribosomes.

The protein resides in the cytoplasm. One of several proteins that assist in the late maturation steps of the functional core of the 30S ribosomal subunit. Associates with free 30S ribosomal subunits (but not with 30S subunits that are part of 70S ribosomes or polysomes). Required for efficient processing of 16S rRNA. May interact with the 5'-terminal helix region of 16S rRNA. The polypeptide is Ribosome-binding factor A (Rickettsia typhi (strain ATCC VR-144 / Wilmington)).